Here is a 533-residue protein sequence, read N- to C-terminus: Tryptophan 7-halogenase KtzQ (533 aa).

Residues G14, T16, A17, A40, E50, and A51 each coordinate FAD. K80 is a catalytic residue. E359 lines the L-tryptophan pocket. Chloride contacts are provided by T361 and G362. L363 provides a ligand contact to FAD. L-tryptophan-binding residues include Y456, Y457, E463, and F467.

Belongs to the flavin-dependent halogenase family. Bacterial tryptophan halogenase subfamily.

The catalysed reaction is L-tryptophan + FADH2 + chloride + O2 = 7-chloro-L-tryptophan + FAD + 2 H2O. Its function is as follows. Involved in the biosynthesis of kutznerides, actinomycete-derived antifungal and antimicrobial cyclic hexadepsipeptides. Together with KtzR, catalyzes the regiospecific dichlorination of L-tryptophan (L-Trp) to produce 6,7-dichloro-L-tryptophan. KtzQ catalyzes the chlorination of L-Trp at C7 position to yield 7-chlorotryptophan. Can also use 6-chloro-L-tryptophan as substrate and form 6,7-dichloro-L-tryptophan, but has a preference for halogenation at the 7 position of unmodified L-Trp. Cannot use piperazic acid or gamma,delta-dehydropiperazic acid. This Kutzneria sp. (strain 744) protein is Tryptophan 7-halogenase KtzQ.